A 182-amino-acid chain; its full sequence is NADH-quinone oxidoreductase subunit I (182 aa).

4Fe-4S ferredoxin-type domains are found at residues 52–82 (LTRD…LQKA) and 92–121 (DFFR…LTPD). Positions 62, 65, 68, 72, 101, 104, 107, and 111 each coordinate [4Fe-4S] cluster.

Belongs to the complex I 23 kDa subunit family. NDH-1 is composed of 13 different subunits. Subunits NuoA, H, J, K, L, M, N constitute the membrane sector of the complex. [4Fe-4S] cluster serves as cofactor.

The protein resides in the cell inner membrane. It carries out the reaction a quinone + NADH + 5 H(+)(in) = a quinol + NAD(+) + 4 H(+)(out). In terms of biological role, NDH-1 shuttles electrons from NADH, via FMN and iron-sulfur (Fe-S) centers, to quinones in the respiratory chain. The immediate electron acceptor for the enzyme in this species is believed to be ubiquinone. Couples the redox reaction to proton translocation (for every two electrons transferred, four hydrogen ions are translocated across the cytoplasmic membrane), and thus conserves the redox energy in a proton gradient. This is NADH-quinone oxidoreductase subunit I from Pseudomonas syringae pv. syringae (strain B728a).